Here is a 155-residue protein sequence, read N- to C-terminus: 3-hydroxyacyl-[acyl-carrier-protein] dehydratase FabZ (155 aa).

Residue H58 is part of the active site.

The protein belongs to the thioester dehydratase family. FabZ subfamily.

The protein localises to the cytoplasm. The catalysed reaction is a (3R)-hydroxyacyl-[ACP] = a (2E)-enoyl-[ACP] + H2O. Its function is as follows. Involved in unsaturated fatty acids biosynthesis. Catalyzes the dehydration of short chain beta-hydroxyacyl-ACPs and long chain saturated and unsaturated beta-hydroxyacyl-ACPs. In Alkalilimnicola ehrlichii (strain ATCC BAA-1101 / DSM 17681 / MLHE-1), this protein is 3-hydroxyacyl-[acyl-carrier-protein] dehydratase FabZ.